A 362-amino-acid chain; its full sequence is Chalcone synthase A (362 aa).

Residue Cys168 is part of the active site.

Belongs to the thiolase-like superfamily. Chalcone/stilbene synthases family.

The catalysed reaction is (E)-4-coumaroyl-CoA + 3 malonyl-CoA + 3 H(+) = 2',4,4',6'-tetrahydroxychalcone + 3 CO2 + 4 CoA. It functions in the pathway secondary metabolite biosynthesis; flavonoid biosynthesis. Functionally, the primary product of this enzyme is 4,2',4',6'-tetrahydroxychalcone (also termed naringenin-chalcone or chalcone) which can under specific conditions spontaneously isomerize into naringenin. In Ipomoea platensis (Morning glory), this protein is Chalcone synthase A (CHSA).